The sequence spans 308 residues: tRNA uridine(34) hydroxylase (308 aa).

Residues 129 to 223 (QEKDTLILDA…YGKHPETQGA (95 aa)) enclose the Rhodanese domain. Cysteine 183 serves as the catalytic Cysteine persulfide intermediate.

This sequence belongs to the TrhO family.

The catalysed reaction is uridine(34) in tRNA + AH2 + O2 = 5-hydroxyuridine(34) in tRNA + A + H2O. Catalyzes oxygen-dependent 5-hydroxyuridine (ho5U) modification at position 34 in tRNAs. This chain is tRNA uridine(34) hydroxylase, found in Onion yellows phytoplasma (strain OY-M).